We begin with the raw amino-acid sequence, 388 residues long: Mannitol-1-phosphate 5-dehydrogenase (388 aa).

Residue alanine 5–glycine 16 coordinates NAD(+). Residue lysine 213 is part of the active site.

Belongs to the mannitol dehydrogenase family. As to quaternary structure, monomer.

It catalyses the reaction D-mannitol 1-phosphate + NAD(+) = beta-D-fructose 6-phosphate + NADH + H(+). Functionally, catalyzes the NAD(H)-dependent interconversion of D-fructose 6-phosphate and D-mannitol 1-phosphate in the mannitol metabolic pathway. This is Mannitol-1-phosphate 5-dehydrogenase (mpdA) from Aspergillus fumigatus (strain CBS 144.89 / FGSC A1163 / CEA10) (Neosartorya fumigata).